A 240-amino-acid polypeptide reads, in one-letter code: UDP-2,3-diacylglucosamine hydrolase (240 aa).

The Mn(2+) site is built by D8, H10, D41, N79, and H114. 79 to 80 (NR) is a binding site for substrate. Substrate is bound by residues D122, S160, N164, K167, and H195. 2 residues coordinate Mn(2+): H195 and H197.

This sequence belongs to the LpxH family. It depends on Mn(2+) as a cofactor.

It is found in the cell inner membrane. The catalysed reaction is UDP-2-N,3-O-bis[(3R)-3-hydroxytetradecanoyl]-alpha-D-glucosamine + H2O = 2-N,3-O-bis[(3R)-3-hydroxytetradecanoyl]-alpha-D-glucosaminyl 1-phosphate + UMP + 2 H(+). The protein operates within glycolipid biosynthesis; lipid IV(A) biosynthesis; lipid IV(A) from (3R)-3-hydroxytetradecanoyl-[acyl-carrier-protein] and UDP-N-acetyl-alpha-D-glucosamine: step 4/6. Functionally, hydrolyzes the pyrophosphate bond of UDP-2,3-diacylglucosamine to yield 2,3-diacylglucosamine 1-phosphate (lipid X) and UMP by catalyzing the attack of water at the alpha-P atom. Involved in the biosynthesis of lipid A, a phosphorylated glycolipid that anchors the lipopolysaccharide to the outer membrane of the cell. In Escherichia coli O81 (strain ED1a), this protein is UDP-2,3-diacylglucosamine hydrolase.